The chain runs to 333 residues: 5-formaminoimidazole-4-carboxamide-1-(beta)-D-ribofuranosyl 5'-monophosphate synthetase (333 aa).

5-amino-1-(5-phospho-beta-D-ribosyl)imidazole-4-carboxamide is bound by residues His20 and Ser85. The 208-residue stretch at 106 to 313 (RELIKWEADQ…YFDRPMDMGE (208 aa)) folds into the ATP-grasp domain. ATP contacts are provided by residues 136-187 (PEEV…VPAY) and Glu209. Residue Asn229 coordinates 5-amino-1-(5-phospho-beta-D-ribosyl)imidazole-4-carboxamide. Glu268 and Glu281 together coordinate Mg(2+).

The protein belongs to the phosphohexose mutase family. It depends on Mg(2+) as a cofactor. The cofactor is Mn(2+).

It catalyses the reaction 5-amino-1-(5-phospho-beta-D-ribosyl)imidazole-4-carboxamide + formate + ATP = 5-formamido-1-(5-phospho-D-ribosyl)imidazole-4-carboxamide + ADP + phosphate. Its pathway is purine metabolism; IMP biosynthesis via de novo pathway; 5-formamido-1-(5-phospho-D-ribosyl)imidazole-4-carboxamide from 5-amino-1-(5-phospho-D-ribosyl)imidazole-4-carboxamide (formate route): step 1/1. Catalyzes the ATP- and formate-dependent formylation of 5-aminoimidazole-4-carboxamide-1-beta-d-ribofuranosyl 5'-monophosphate (AICAR) to 5-formaminoimidazole-4-carboxamide-1-beta-d-ribofuranosyl 5'-monophosphate (FAICAR) in the absence of folates. The polypeptide is 5-formaminoimidazole-4-carboxamide-1-(beta)-D-ribofuranosyl 5'-monophosphate synthetase (Pyrobaculum islandicum (strain DSM 4184 / JCM 9189 / GEO3)).